Here is a 272-residue protein sequence, read N- to C-terminus: Phosphoglycolate phosphatase (272 aa).

Asp-19 functions as the Nucleophile in the catalytic mechanism. Residues Asp-19, Asp-21, and Asp-182 each coordinate Mg(2+).

The protein belongs to the HAD-like hydrolase superfamily. CbbY/CbbZ/Gph/YieH family. Mg(2+) serves as cofactor.

The enzyme catalyses 2-phosphoglycolate + H2O = glycolate + phosphate. It functions in the pathway organic acid metabolism; glycolate biosynthesis; glycolate from 2-phosphoglycolate: step 1/1. In terms of biological role, specifically catalyzes the dephosphorylation of 2-phosphoglycolate. Is involved in the dissimilation of the intracellular 2-phosphoglycolate formed during the DNA repair of 3'-phosphoglycolate ends, a major class of DNA lesions induced by oxidative stress. In Pseudomonas fluorescens (strain ATCC BAA-477 / NRRL B-23932 / Pf-5), this protein is Phosphoglycolate phosphatase.